Consider the following 1364-residue polypeptide: DNA-directed RNA polymerase subunit beta' (1364 aa).

A disordered region spans residues 1–42; it reads MTSSSSKSNKSRKSSKAAKDTTPVHESASRPLSKTPPPFRNH. Residues Cys250, Cys317, Cys324, and Cys327 each coordinate Zn(2+).

The protein belongs to the RNA polymerase beta' chain family. RpoC2 subfamily. As to quaternary structure, in cyanobacteria the RNAP catalytic core is composed of 2 alpha, 1 beta, 1 beta', 1 gamma and 1 omega subunit. When a sigma factor is associated with the core the holoenzyme is formed, which can initiate transcription. The cofactor is Zn(2+).

It catalyses the reaction RNA(n) + a ribonucleoside 5'-triphosphate = RNA(n+1) + diphosphate. Its function is as follows. DNA-dependent RNA polymerase catalyzes the transcription of DNA into RNA using the four ribonucleoside triphosphates as substrates. The protein is DNA-directed RNA polymerase subunit beta' of Parasynechococcus marenigrum (strain WH8102).